Here is a 578-residue protein sequence, read N- to C-terminus: Transcriptional regulator SKO1 (578 aa).

Positions 39–50 (NDAISDVNSVAT) are enriched in polar residues. Disordered stretches follow at residues 39-169 (NDAI…TQQP), 176-195 (MSGM…RSGL), 287-311 (LQQD…QPQP), and 342-489 (ESKP…RKNF). The span at 51-62 (SGSSINNGSSSN) shows a compositional bias: low complexity. Polar residues-rich tracts occupy residues 70–80 (NISSVNQQQGV) and 107–132 (GGTT…TLGS). Low complexity predominate over residues 154–169 (PQQQQQPQQQQQTQQP). Residues 184–193 (LTPNESNIRS) show a composition bias toward polar residues. 2 stretches are compositionally biased toward low complexity: residues 287 to 296 (LQQDQSSQAL) and 356 to 370 (DLNP…TTTA). Residues 384–402 (KKAKVAKGKKKEPKSKSKG) show a composition bias toward basic residues. Positions 415 to 443 (KPEDENVPGKENGNEENHKVEAESKEEHL) are enriched in basic and acidic residues. A compositionally biased stretch (low complexity) spans 445 to 471 (NGNETTTTKTNNTGNSSNGTTTTTTTK). Positions 483–546 (DDKRKNFLER…LLLKEKHNIQ (64 aa)) constitute a bZIP domain. Positions 485–505 (KRKNFLERNRVAASKCRQRKK) are basic motif. The segment at 508–515 (IQKMEEEL) is leucine-zipper.

The protein belongs to the bZIP family. Undergoes HOG1-dependent phosphorylation after osmotic stress.

The protein localises to the nucleus. In terms of biological role, transcription repressor involved in cell wall damage response. Regulates 79 caspofungin-responsive genes, including several cell wall biogenesis genes such as CRH11, MNN2, and SKN1. Also controls the expression of pathogenesis and hyphal related genes and represses the yeast-to-hypha transition. Mediates the response to oxidative stress. This chain is Transcriptional regulator SKO1 (SKO1), found in Candida albicans (strain SC5314 / ATCC MYA-2876) (Yeast).